The following is a 446-amino-acid chain: Tol-Pal system protein TolB (446 aa).

An N-terminal signal peptide occupies residues 1–36; it reads MMDVQTVRRGNAVQSLMSKLILPLVMAVAFALPARA. A disordered region spans residues 424-446; that stretch reads GYNERPSPTPTFASDPAWSPRIQ.

The protein belongs to the TolB family. As to quaternary structure, the Tol-Pal system is composed of five core proteins: the inner membrane proteins TolA, TolQ and TolR, the periplasmic protein TolB and the outer membrane protein Pal. They form a network linking the inner and outer membranes and the peptidoglycan layer.

It is found in the periplasm. Its function is as follows. Part of the Tol-Pal system, which plays a role in outer membrane invagination during cell division and is important for maintaining outer membrane integrity. The protein is Tol-Pal system protein TolB of Parvibaculum lavamentivorans (strain DS-1 / DSM 13023 / NCIMB 13966).